A 215-amino-acid chain; its full sequence is Probable phosphoglycerate mutase GpmB (215 aa).

Residues 8–15 (RHGETLWN), 21–22 (QG), R58, 82–85 (ELNM), and 151–152 (GM) each bind substrate. Catalysis depends on H9, which acts as the Tele-phosphohistidine intermediate. E82 functions as the Proton donor/acceptor in the catalytic mechanism.

It belongs to the phosphoglycerate mutase family. GpmB subfamily.

The enzyme catalyses (2R)-2-phosphoglycerate = (2R)-3-phosphoglycerate. Its pathway is carbohydrate degradation; glycolysis; pyruvate from D-glyceraldehyde 3-phosphate: step 3/5. The sequence is that of Probable phosphoglycerate mutase GpmB from Yersinia pseudotuberculosis serotype O:1b (strain IP 31758).